The following is a 98-amino-acid chain: Feather keratin 4 (98 aa).

Serine 2 carries the post-translational modification N-acetylserine.

It belongs to the avian keratin family. The avian keratins (F-ker, S-ker, C-ker and B-ker) are a complex mixture of very similar polypeptides.

This is Feather keratin 4 from Gallus gallus (Chicken).